A 210-amino-acid chain; its full sequence is Probable GTP-binding protein EngB (210 aa).

Positions 30-204 constitute an EngB-type G domain; the sequence is QGYEVAFAGR…YRVLADWMEL (175 aa). Residues 38–45, 64–68, 82–85, 149–152, and 182–185 each bind GTP; these read GRSNAGKS, GRTQL, DLPG, TKAD, and LFSA. 2 residues coordinate Mg(2+): Ser45 and Thr66.

Belongs to the TRAFAC class TrmE-Era-EngA-EngB-Septin-like GTPase superfamily. EngB GTPase family. Requires Mg(2+) as cofactor.

Necessary for normal cell division and for the maintenance of normal septation. In Pseudomonas entomophila (strain L48), this protein is Probable GTP-binding protein EngB.